A 723-amino-acid polypeptide reads, in one-letter code: MSETNSGGKCPVMHGANSTENRDVMNWWPEALNLDILHQHDHKTNPMGEDFDYREEVKKLDFEAVKKDLHALMTDSQDWWPADWGHYGGLMIRMSWHAAGTYRIQDGRGGGGTGNQRFAPLNSWPDNVSLDKARRLLWPIKKKYGNKLSWADLIILAGTVAYESMGLPSYGFSFGREDIWHPEKDIYWGNEKEWLAPSDERYGDVEKPDTMENPLAAVQMGLIYVNPEGVNSQPDPIKTGEQVRVTFARMAMDDEETAALTAGGHTVGKCHGNGDAGALGPEPEAADVEEQGFGWSNPNMKGKAANAVTSGIEGAWTTHPTKFDMGYFDLLFGYEWELKKSPAGAWQWEPINMKEEDKPLDASDPSKRHNPIMTDADMAMKMDPKYRAICEKFMADPEYFKDCFARAWFKLTHRDLGPKARYIGPEAPAEDLIWQDPVPAGSTDYCEEVVKEKVADSGLSISEMVSTAWDSARTFRGSDMRGGANGARIRLAPQKDWEGNEPARLSKVLKVYEQISAETGASVADVIVLAGSVGIEKAAKAAGYEVRVPFLKGRGDATDEMTDAPSFEYLEPVADGFRNWQKKDYIVKPEELLLDRAQLMGLTAPEMTVLIGGMRVLGTNHGGTKYGVFTDREGQLTNDFFVNLTDMAYSWKPVGNGTYEIRDRKTDQTKWTASRVDLVFGSNSILRSYAEVYAQDDNGEKFVKDFIAAWTKVMNNDRFDVQA.

A cross-link (tryptophyl-tyrosyl-methioninium (Trp-Tyr) (with M-250)) is located at residues 96–224 (WHAAGTYRIQ…LAAVQMGLIY (129 aa)). The active-site Proton acceptor is H97. The tryptophyl-tyrosyl-methioninium (Tyr-Met) (with W-96) cross-link spans 224 to 250 (YVNPEGVNSQPDPIKTGEQVRVTFARM). Residue H265 coordinates heme b.

It belongs to the peroxidase family. Peroxidase/catalase subfamily. As to quaternary structure, homodimer or homotetramer. Heme b is required as a cofactor. Formation of the three residue Trp-Tyr-Met cross-link is important for the catalase, but not the peroxidase activity of the enzyme.

The enzyme catalyses H2O2 + AH2 = A + 2 H2O. The catalysed reaction is 2 H2O2 = O2 + 2 H2O. In terms of biological role, bifunctional enzyme with both catalase and broad-spectrum peroxidase activity. The polypeptide is Catalase-peroxidase (Marinobacter nauticus (strain ATCC 700491 / DSM 11845 / VT8) (Marinobacter aquaeolei)).